Here is a 549-residue protein sequence, read N- to C-terminus: Neurofilament light polypeptide (549 aa).

Ser2 is subject to N-acetylserine. A head region spans residues 2–92; it reads SSFYSEPYYS…KSIRTQEKAQ (91 aa). O-linked (GlcNAc) threonine glycosylation is present at Thr21. The residue at position 23 (Arg23) is an Asymmetric dimethylarginine; alternate. An Omega-N-methylarginine; alternate modification is found at Arg23. Ser27 carries an O-linked (GlcNAc) serine glycan. The residue at position 30 (Arg30) is an Omega-N-methylarginine. Phosphotyrosine is present on Tyr43. Ser56, Ser66, and Ser102 each carry phosphoserine. The region spanning 89–400 is the IF rod domain; the sequence is EKAQLQDLND…KLLEGEETRL (312 aa). The coil 1A stretch occupies residues 93-124; it reads LQDLNDRFASFIERVHELEQQNKVLEAQLLVL. Positions 125 to 137 are linker 1; it reads RQKHSEPSRFRAL. The coil 1B stretch occupies residues 138 to 233; that stretch reads YEQEIRDLRL…KVHEEEIAEL (96 aa). The tract at residues 234–252 is linker 12; sequence QAQIQYAQISVEMDVSSKP. The coil 2A stretch occupies residues 253-271; it reads DLSAALKDIRAQYEKLAAK. The tract at residues 272–280 is linker 2; it reads NMQNAEEWF. The segment at 281–396 is coil 2B; it reads KSRFTVLTES…AAYRKLLEGE (116 aa). Residues 381–391 are epitope; recognized by IF-specific monoclonal antibody; that stretch reads ALDIEIAAYRK. Positions 397-443 are tail, subdomain A; sequence ETRLSFTSVGSLTTGYSQSSQVFGRSAYGGLQTSSYLMSTRSFPSYY. The segment at 397-549 is tail; it reads ETRLSFTSVG…GEEQATKKKD (153 aa). A tail, subdomain B (acidic) region spans residues 444–549; sequence TSHVQEEQIE…GEEQATKKKD (106 aa). The disordered stretch occupies residues 462-549; that stretch reads KAEEAKDEPP…GEEQATKKKD (88 aa). Positions 471–534 are enriched in acidic residues; the sequence is PSEGEAEEEG…ETKEAEEEEK (64 aa). Ser472 carries the phosphoserine modification. Thr526 carries the post-translational modification Phosphothreonine. Residues 535-549 are compositionally biased toward basic and acidic residues; the sequence is KDEGAGEEQATKKKD.

Belongs to the intermediate filament family. In terms of assembly, forms homodimers (in vitro). Forms heterodimers with NEFH or NEFM; which can further hetero-oligomerize (in vitro). Forms heterodimers with INA (in vitro). Interacts with ARHGEF28. Interacts with TRIM2. O-glycosylated. In terms of processing, phosphorylated in the head and rod regions by the PKC kinase PKN1, leading to the inhibition of polymerization. Post-translationally, ubiquitinated in the presence of TRIM2 and UBE2D1.

It is found in the cell projection. Its subcellular location is the axon. The protein resides in the cytoplasm. The protein localises to the cytoskeleton. Neurofilaments usually contain three intermediate filament proteins: NEFL, NEFM, and NEFH which are involved in the maintenance of neuronal caliber. May additionally cooperate with the neuronal intermediate filament proteins PRPH and INA to form neuronal filamentous networks. The protein is Neurofilament light polypeptide (NEFL) of Sus scrofa (Pig).